The primary structure comprises 407 residues: Imidazolonepropionase (407 aa).

His-68 and His-70 together coordinate Fe(3+). Zn(2+)-binding residues include His-68 and His-70. Residues Arg-77, Tyr-140, and His-173 each contribute to the 4-imidazolone-5-propanoate site. Tyr-140 is a binding site for N-formimidoyl-L-glutamate. His-238 contacts Fe(3+). Residue His-238 participates in Zn(2+) binding. Gln-241 is a 4-imidazolone-5-propanoate binding site. Residue Asp-313 coordinates Fe(3+). Zn(2+) is bound at residue Asp-313. Residues Asn-315 and Gly-317 each contribute to the N-formimidoyl-L-glutamate site. Thr-318 lines the 4-imidazolone-5-propanoate pocket.

It belongs to the metallo-dependent hydrolases superfamily. HutI family. Requires Zn(2+) as cofactor. Fe(3+) serves as cofactor.

The protein resides in the cytoplasm. The enzyme catalyses 4-imidazolone-5-propanoate + H2O = N-formimidoyl-L-glutamate. It functions in the pathway amino-acid degradation; L-histidine degradation into L-glutamate; N-formimidoyl-L-glutamate from L-histidine: step 3/3. Catalyzes the hydrolytic cleavage of the carbon-nitrogen bond in imidazolone-5-propanoate to yield N-formimidoyl-L-glutamate. It is the third step in the universal histidine degradation pathway. This is Imidazolonepropionase from Burkholderia cenocepacia (strain ATCC BAA-245 / DSM 16553 / LMG 16656 / NCTC 13227 / J2315 / CF5610) (Burkholderia cepacia (strain J2315)).